The following is a 302-amino-acid chain: Putative receptor-like protein 16 (302 aa).

LRR repeat units lie at residues 1–19 (MNLTTNGFQRNLPSSLGNM), 20–43 (EMIEFLDISHNSFHGKLPRSFLKG), and 45–70 (DSLIVLKLSHKKLSEEVFPEASNFFS). An LRR 4; degenerate repeat occupies 72–91 (LELSMDNNLFTGKIGRGLQS). LRR repeat units lie at residues 92-115 (LRSLIMLDISNNNLSGVIPSWFDQ), 116-140 (LQDLHSLQISNNLLEGEVPISLFNM), 142-164 (SLQLLALSANSLSGDLPQAISGY), 166-188 (ALKVLLLRDNNLSGVIPDTLLGK), 190-211 (IIVLDLRNNRLSGNIPEFINTQ), 213-234 (IRILLLRGNNLTGSIPRRLCAV), and 235-258 (RSIHLLDLANNKLNGSIPSCLRNA).

The protein belongs to the RLP family.

The polypeptide is Putative receptor-like protein 16 (Arabidopsis thaliana (Mouse-ear cress)).